Consider the following 122-residue polypeptide: Large ribosomal subunit protein uL22c (122 aa).

It belongs to the universal ribosomal protein uL22 family. As to quaternary structure, part of the 50S ribosomal subunit.

The protein resides in the plastid. The protein localises to the chloroplast. This protein binds specifically to 23S rRNA. Functionally, the globular domain of the protein is located near the polypeptide exit tunnel on the outside of the subunit, while an extended beta-hairpin is found that lines the wall of the exit tunnel in the center of the 70S ribosome. The chain is Large ribosomal subunit protein uL22c (rpl22) from Adiantum capillus-veneris (Maidenhair fern).